The following is a 572-amino-acid chain: Urease subunit alpha (572 aa).

Residues His139, His141, and Lys222 each coordinate Ni(2+). At Lys222 the chain carries N6-carboxylysine. His224 serves as a coordination point for substrate. Residues His251 and His277 each coordinate Ni(2+). The active-site Proton donor is the His325. Residue Asp365 participates in Ni(2+) binding.

Belongs to the metallo-dependent hydrolases superfamily. Urease alpha subunit family. In terms of assembly, heterotrimer of UreA (gamma), UreB (beta) and UreC (alpha) subunits. Three heterotrimers associate to form the active enzyme. Ni cation serves as cofactor. Carboxylation allows a single lysine to coordinate two nickel ions.

The protein resides in the cytoplasm. It carries out the reaction urea + 2 H2O + H(+) = hydrogencarbonate + 2 NH4(+). The protein operates within nitrogen metabolism; urea degradation; CO(2) and NH(3) from urea (urease route): step 1/1. The polypeptide is Urease subunit alpha (Acetivibrio thermocellus (strain ATCC 27405 / DSM 1237 / JCM 9322 / NBRC 103400 / NCIMB 10682 / NRRL B-4536 / VPI 7372) (Clostridium thermocellum)).